Here is a 226-residue protein sequence, read N- to C-terminus: Aspartyl protease inhibitor (226 aa).

Residues methionine 1–alanine 15 form the signal peptide. Disordered regions lie at residues glycine 95–serine 116 and glutamate 196–valine 218. A disulfide bridge connects residues cysteine 131 and cysteine 222.

The protein belongs to the protease inhibitor I33 family.

The protein localises to the secreted. Functionally, aspartyl protease inhibitor. This Parelaphostrongylus tenuis (Meningeal worm) protein is Aspartyl protease inhibitor.